A 109-amino-acid polypeptide reads, in one-letter code: NAD(P)H-quinone oxidoreductase subunit M (109 aa).

This sequence belongs to the complex I NdhM subunit family. In terms of assembly, NDH-1 can be composed of about 15 different subunits; different subcomplexes with different compositions have been identified which probably have different functions.

The protein resides in the cellular thylakoid membrane. It carries out the reaction a plastoquinone + NADH + (n+1) H(+)(in) = a plastoquinol + NAD(+) + n H(+)(out). The enzyme catalyses a plastoquinone + NADPH + (n+1) H(+)(in) = a plastoquinol + NADP(+) + n H(+)(out). Functionally, NDH-1 shuttles electrons from an unknown electron donor, via FMN and iron-sulfur (Fe-S) centers, to quinones in the respiratory and/or the photosynthetic chain. The immediate electron acceptor for the enzyme in this species is believed to be plastoquinone. Couples the redox reaction to proton translocation, and thus conserves the redox energy in a proton gradient. Cyanobacterial NDH-1 also plays a role in inorganic carbon-concentration. This Microcystis aeruginosa (strain NIES-843 / IAM M-2473) protein is NAD(P)H-quinone oxidoreductase subunit M.